The chain runs to 125 residues: Small ribosomal subunit protein uS13 (125 aa).

A disordered region spans residues 92 to 125 (RHRRGLPVRGQRTRTNARTRKGKKKTVGAQAKKK).

It belongs to the universal ribosomal protein uS13 family. As to quaternary structure, part of the 30S ribosomal subunit. Forms a loose heterodimer with protein S19. Forms two bridges to the 50S subunit in the 70S ribosome.

Functionally, located at the top of the head of the 30S subunit, it contacts several helices of the 16S rRNA. In the 70S ribosome it contacts the 23S rRNA (bridge B1a) and protein L5 of the 50S subunit (bridge B1b), connecting the 2 subunits; these bridges are implicated in subunit movement. Contacts the tRNAs in the A and P-sites. The chain is Small ribosomal subunit protein uS13 from Akkermansia muciniphila (strain ATCC BAA-835 / DSM 22959 / JCM 33894 / BCRC 81048 / CCUG 64013 / CIP 107961 / Muc).